Here is a 422-residue protein sequence, read N- to C-terminus: Imidazolonepropionase (422 aa).

Fe(3+) is bound by residues H82 and H84. Zn(2+) contacts are provided by H82 and H84. Positions 91, 154, and 187 each coordinate 4-imidazolone-5-propanoate. Y154 provides a ligand contact to N-formimidoyl-L-glutamate. H252 contacts Fe(3+). H252 contributes to the Zn(2+) binding site. E255 lines the 4-imidazolone-5-propanoate pocket. Residue D327 participates in Fe(3+) binding. D327 contributes to the Zn(2+) binding site. N-formimidoyl-L-glutamate is bound by residues N329 and G331. A 4-imidazolone-5-propanoate-binding site is contributed by S332.

Belongs to the metallo-dependent hydrolases superfamily. HutI family. It depends on Zn(2+) as a cofactor. Requires Fe(3+) as cofactor.

It localises to the cytoplasm. The enzyme catalyses 4-imidazolone-5-propanoate + H2O = N-formimidoyl-L-glutamate. Its pathway is amino-acid degradation; L-histidine degradation into L-glutamate; N-formimidoyl-L-glutamate from L-histidine: step 3/3. In terms of biological role, catalyzes the hydrolytic cleavage of the carbon-nitrogen bond in imidazolone-5-propanoate to yield N-formimidoyl-L-glutamate. It is the third step in the universal histidine degradation pathway. The protein is Imidazolonepropionase of Alkaliphilus metalliredigens (strain QYMF).